A 1150-amino-acid polypeptide reads, in one-letter code: Protogenin (1150 aa).

The signal sequence occupies residues 1-35 (MAPPLRPLARLRPPGMLLRALLLLLLLSPLPGVWC). 4 Ig-like domains span residues 36–130 (FSEL…AHLA), 135–222 (SAFE…ASLT), 235–322 (PTII…ATLT), and 327–411 (PSFV…ARLT). At 36–949 (FSELSFVKEP…YYHLDQKSMT (914 aa)) the chain is on the extracellular side. Cystine bridges form between Cys60–Cys113, Cys156–Cys205, Cys256–Cys304, and Cys348–Cys395. Asn90 carries an N-linked (GlcNAc...) asparagine glycan. Fibronectin type-III domains follow at residues 421 to 515 (APYN…TLED), 517 to 613 (PLRP…TPKA), 618 to 717 (APKS…VRDR), 724 to 817 (PPHH…TLPE), and 822 to 917 (PPVG…VLPK). Asn488 carries an N-linked (GlcNAc...) asparagine glycan. Asn630 carries N-linked (GlcNAc...) asparagine glycosylation. A helical transmembrane segment spans residues 950 to 970 (GIAVGVGIALTCILICVLILI). The Cytoplasmic portion of the chain corresponds to 971–1150 (YRSKARKSSA…SVISTTPPNL (180 aa)). Disordered stretches follow at residues 981-1002 (SKTA…ASGN) and 1086-1150 (ISDE…PPNL). Polar residues-rich tracts occupy residues 983–1000 (TAQN…SLAS) and 1092–1102 (PSSPGQTTSFS). The segment covering 1110 to 1138 (DTEHSANSEGSHETGDSGRFSHESNDEIH) has biased composition (basic and acidic residues). The segment covering 1141–1150 (SVISTTPPNL) has biased composition (polar residues).

It belongs to the immunoglobulin superfamily. DCC family.

Its subcellular location is the membrane. Functionally, may play a role in anteroposterior axis elongation. This chain is Protogenin, found in Homo sapiens (Human).